Consider the following 441-residue polypeptide: Protein MONOCULM 1 (441 aa).

Residues methionine 1–alanine 33 form a disordered region. The span at serine 7–cysteine 20 shows a compositional bias: low complexity. Gly residues predominate over residues lysine 21–alanine 33. The GRAS domain maps to arginine 41–glutamine 437. Residues proline 48–alanine 126 are leucine repeat I (LRI). The interval tyrosine 127–glycine 195 is VHIID. The VHIID motif lies at valine 158–aspartate 162. Residues arginine 205–threonine 256 form a leucine repeat II (LRII) region. The interval leucine 266–alanine 361 is PFYRE. Residues glycine 364–glutamine 437 are SAW.

Belongs to the GRAS family. Expressed in a small number of epidermal or subepidermal cells at the leaf axils, in axillary meristems and the entire tiller buds. Undetected in the shoot apical meristem.

The protein resides in the nucleus. Its function is as follows. Putative transcription regulator that controls rice tillering by initiating axillary buds and promoting their outgrowth. Rice tiller is a specialized grain-bearing branch that is formed on the unelongated basal internode and grows independently of the mother stem (culm) by means of its own adventitious roots. In Oryza sativa subsp. japonica (Rice), this protein is Protein MONOCULM 1.